The primary structure comprises 482 residues: Argininosuccinate synthase (482 aa).

Residues 17–25 and A43 contribute to the ATP site; that span reads AFSGGLDTS. L-citrulline is bound at residue Y99. G129 and T131 together coordinate ATP. 3 residues coordinate L-aspartate: T131, N135, and D136. L-citrulline is bound at residue N135. D136 is an ATP binding site. The L-citrulline site is built by R139 and S192. An ATP-binding site is contributed by D194. L-citrulline contacts are provided by T201, E203, and E280. Residues 461-482 are disordered; the sequence is SRGEATDEETMLDRAAMESGTD.

This sequence belongs to the argininosuccinate synthase family. Type 2 subfamily. As to quaternary structure, homotetramer.

The protein resides in the cytoplasm. It carries out the reaction L-citrulline + L-aspartate + ATP = 2-(N(omega)-L-arginino)succinate + AMP + diphosphate + H(+). Its pathway is amino-acid biosynthesis; L-arginine biosynthesis; L-arginine from L-ornithine and carbamoyl phosphate: step 2/3. The sequence is that of Argininosuccinate synthase (argG) from Streptomyces lavendulae.